We begin with the raw amino-acid sequence, 145 residues long: Histone H3-like centromeric protein A (145 aa).

Basic residues predominate over residues 1-19 (MPRHTSAHKRKPSTPRRRS). Positions 1–54 (MPRHTSAHKRKPSTPRRRSPPASLPPPAGSRTRRHSGPSGSSPRKKHKFRPGTR) are disordered. A Phosphoserine modification is found at Ser19. Residues 51-145 (PGTRALMEIR…ARRIRGVEHM (95 aa)) form an H3-like region.

This sequence belongs to the histone H3 family. As to quaternary structure, component of centromeric nucleosomes, where DNA is wrapped around a histone octamer core. The octamer contains two molecules each of H2A, H2B, CENPA and H4 assembled in one CENPA-H4 heterotetramer and two H2A-H2B heterodimers. CENPA modulates the DNA-binding characteristics of nucleosomes so that protruding DNA ends have higher flexibility than in nucleosomes containing conventional histone H3.

The protein resides in the nucleus. It localises to the chromosome. It is found in the centromere. In terms of biological role, histone H3-like nucleosomal protein that is specifically found in centromeric nucleosomes. Replaces conventional H3 in the nucleosome core of centromeric chromatin that serves as an assembly site for the inner kinetochore. The presence of CENPA subtly modifies the nucleosome structure and the way DNA is wrapped around the nucleosome and gives rise to protruding DNA ends that are less well-ordered and rigid compared to nucleosomes containing histone H3. May serve as an epigenetic mark that propagates centromere identity through replication and cell division. Required for recruitment and assembly of kinetochore proteins, and as a consequence required for progress through mitosis, chromosome segregation and cytokinesis. The protein is Histone H3-like centromeric protein A (cenpa) of Danio rerio (Zebrafish).